Reading from the N-terminus, the 610-residue chain is Alpha-fetoprotein (610 aa).

Positions 1–18 (MKWVVSFFLLFLLNFSDS) are cleaved as a signal peptide. Albumin domains follow at residues 19-210 (RTMH…TSIT), 211-403 (KELR…EELE), and 404-602 (KYIQ…ALIS). His22 lines the Cu(2+) pocket. 8 cysteine pairs are disulfide-bonded: Cys99/Cys114, Cys113/Cys124, Cys148/Cys193, Cys192/Cys201, Cys224/Cys270, Cys269/Cys277, Cys289/Cys303, and Cys302/Cys314. A phosphoserine mark is found at Ser111 and Ser115. Asn197 and Asn251 each carry an N-linked (GlcNAc...) asparagine glycan. Position 345 is a phosphoserine (Ser345). Intrachain disulfides connect Cys385/Cys394, Cys417/Cys463, Cys462/Cys473, Cys486/Cys502, Cys501/Cys512, Cys539/Cys584, and Cys583/Cys592. Ser445 bears the Phosphoserine mark.

The protein belongs to the ALB/AFP/VDB family. Dimeric and trimeric forms have been found in addition to the monomeric form. Post-translationally, sulfated. In terms of tissue distribution, plasma.

It is found in the secreted. Its function is as follows. Binds copper, nickel, and fatty acids as well as, and bilirubin less well than, serum albumin. The chain is Alpha-fetoprotein (AFP) from Bos taurus (Bovine).